Here is a 546-residue protein sequence, read N- to C-terminus: Hydroxylamine reductase (546 aa).

Positions 3, 6, 18, and 25 each coordinate [4Fe-4S] cluster. 8 residues coordinate hybrid [4Fe-2O-2S] cluster: histidine 245, glutamate 269, cysteine 313, cysteine 401, cysteine 429, cysteine 454, glutamate 488, and lysine 490. A Cysteine persulfide modification is found at cysteine 401.

It belongs to the HCP family. Requires [4Fe-4S] cluster as cofactor. It depends on hybrid [4Fe-2O-2S] cluster as a cofactor.

The protein localises to the cytoplasm. It carries out the reaction A + NH4(+) + H2O = hydroxylamine + AH2 + H(+). Its activity is regulated as follows. Inhibited by cyanide and by sulfide and iron reagents such as dithioerythritol, 2,2'-dipyridyl and o-phenanthroline. Functionally, could be involved in assimilation and/or detoxification of hydroxylamine, which is a toxic compound that may be formed during nitrate/nitrite assimilation. Catalyzes the reduction of hydroxylamine to form NH(3) and H(2)O. It has a low reductase activity with FAD, FMN, benzyl viologen and bromphenol blue as electrons donors, but it is not able to use NAD or NADP. This chain is Hydroxylamine reductase, found in Rhodobacter capsulatus (Rhodopseudomonas capsulata).